The following is a 325-amino-acid chain: NADH-quinone oxidoreductase subunit H (325 aa).

The next 8 helical transmembrane spans lie at 11 to 31 (VIIAVVKALVILFVVVGCGAF), 81 to 101 (VIFTLAPMIAFTSLLLAMAIV), 114 to 134 (IGLLFFLMMAGLAVYAVLFAG), 154 to 174 (LSYEVFLGLSLMGVVAQAGSF), 186 to 206 (LWNVIPQFLGFLTFCIAGVAV), 237 to 257 (FFVGEYVGIVTVSALIVTLFF), 265 to 285 (LPPVIWFALKTAFFMMMFILI), and 304 to 324 (VCLPLTLLNLLATAAVILYTA).

It belongs to the complex I subunit 1 family. As to quaternary structure, NDH-1 is composed of 13 different subunits. Subunits NuoA, H, J, K, L, M, N constitute the membrane sector of the complex.

The protein resides in the cell inner membrane. The enzyme catalyses a quinone + NADH + 5 H(+)(in) = a quinol + NAD(+) + 4 H(+)(out). Functionally, NDH-1 shuttles electrons from NADH, via FMN and iron-sulfur (Fe-S) centers, to quinones in the respiratory chain. The immediate electron acceptor for the enzyme in this species is believed to be ubiquinone. Couples the redox reaction to proton translocation (for every two electrons transferred, four hydrogen ions are translocated across the cytoplasmic membrane), and thus conserves the redox energy in a proton gradient. This subunit may bind ubiquinone. This is NADH-quinone oxidoreductase subunit H from Erwinia tasmaniensis (strain DSM 17950 / CFBP 7177 / CIP 109463 / NCPPB 4357 / Et1/99).